Here is a 37-residue protein sequence, read N- to C-terminus: Myo-inositol-binding protein (37 aa).

The protein belongs to the bacterial solute-binding protein 2 family.

The protein resides in the periplasm. This is Myo-inositol-binding protein from Pseudomonas sp.